A 720-amino-acid chain; its full sequence is NAD(+) hydrolase ApTIR (720 aa).

The 131-residue stretch at 1-131 (MRYDAFISYS…AVPPALRGVF (131 aa)) folds into the TIR domain. Residues 10–11 (SH) and A48 each bind NAD(+). E84 is a catalytic residue. A helical transmembrane segment spans residues 192–211 (GALAVVCALLLLVAGTAVAW). 2 disordered regions span residues 231–275 (ATAA…AVAE) and 292–359 (EGIA…EEAV). Basic and acidic residues-rich tracts occupy residues 256–268 (EQQR…EEAR) and 307–359 (AEAR…EEAV). Positions 313–362 (RGVADAEKAKANRAAAEAERQRKIAADEQRKAHEAAAEAERQREEAVKQQ) form a coiled coil. 7 WD repeats span residues 420–459 (GHTA…APRR), 465–504 (SSTA…APRR), 510–549 (GHTD…APRR), 555–594 (DHTA…APRR), 600–639 (GHTA…APRR), 645–684 (GHTA…APRR), and 690–720 (GHTD…CCGM).

The protein resides in the cell membrane. It carries out the reaction NAD(+) + H2O = ADP-D-ribose + nicotinamide + H(+). In terms of biological role, NAD(+) hydrolase (NADase) that catalyzes cleavage of NAD(+) into ADP-D-ribose (ADPR) and nicotinamide. This is NAD(+) hydrolase ApTIR from Actinoplanes sp. (strain ATCC 31044 / CBS 674.73 / SE50/110).